The primary structure comprises 264 residues: Protein-lysine methyltransferase METTL21C (264 aa).

Residues 1-10 are compositionally biased toward polar residues; sequence MDVCLSSAQQ. The disordered stretch occupies residues 1 to 46; the sequence is MDVCLSSAQQPGRRGEGLSSPGGWLEAEKKGAPQKDSTGGVLEESN. S-adenosyl-L-methionine-binding positions include Trp-92, 120–122, Asp-141, Trp-172, and Ser-193; that span reads GAG.

This sequence belongs to the methyltransferase superfamily. METTL21 family. As to quaternary structure, interacts with members of the heat shock protein 70 families; these proteins may possibly be methylation substrates for the enzyme.

The protein localises to the nucleus. The protein resides in the cytoplasm. The catalysed reaction is L-lysyl-[protein] + S-adenosyl-L-methionine = N(6)-methyl-L-lysyl-[protein] + S-adenosyl-L-homocysteine + H(+). It carries out the reaction N(6)-methyl-L-lysyl-[protein] + S-adenosyl-L-methionine = N(6),N(6)-dimethyl-L-lysyl-[protein] + S-adenosyl-L-homocysteine + H(+). The enzyme catalyses N(6),N(6)-dimethyl-L-lysyl-[protein] + S-adenosyl-L-methionine = N(6),N(6),N(6)-trimethyl-L-lysyl-[protein] + S-adenosyl-L-homocysteine + H(+). In terms of biological role, protein-lysine N-methyltransferase using S-adenosyl-L-methionine as methyl donor. Mono-di and trimethylates 'Lys-943' of AARS1. The chain is Protein-lysine methyltransferase METTL21C from Homo sapiens (Human).